We begin with the raw amino-acid sequence, 336 residues long: 3-isopropylmalate dehydrogenase (336 aa).

Arg-87, Arg-97, Arg-121, and Asp-211 together coordinate substrate. The Mg(2+) site is built by Asp-211, Asp-235, and Asp-239. Residue 271–283 (GSAPDIAGQGIAD) coordinates NAD(+).

The protein belongs to the isocitrate and isopropylmalate dehydrogenases family. LeuB type 2 subfamily. In terms of assembly, homodimer. Mg(2+) serves as cofactor. Mn(2+) is required as a cofactor.

It localises to the cytoplasm. It carries out the reaction (2R,3S)-3-isopropylmalate + NAD(+) = 4-methyl-2-oxopentanoate + CO2 + NADH. It functions in the pathway amino-acid biosynthesis; L-leucine biosynthesis; L-leucine from 3-methyl-2-oxobutanoate: step 3/4. Catalyzes the oxidation of 3-carboxy-2-hydroxy-4-methylpentanoate (3-isopropylmalate) to 3-carboxy-4-methyl-2-oxopentanoate. The product decarboxylates to 4-methyl-2 oxopentanoate. This Mycolicibacterium paratuberculosis (strain ATCC BAA-968 / K-10) (Mycobacterium paratuberculosis) protein is 3-isopropylmalate dehydrogenase.